We begin with the raw amino-acid sequence, 112 residues long: Nucleoid-associated protein CPR_0056 (112 aa).

The span at 91 to 100 (ASEETSEKMG) shows a compositional bias: basic and acidic residues. The tract at residues 91–112 (ASEETSEKMGKLTGGMGMPGLF) is disordered. The segment covering 102-112 (LTGGMGMPGLF) has biased composition (gly residues).

It belongs to the YbaB/EbfC family. In terms of assembly, homodimer.

The protein localises to the cytoplasm. It localises to the nucleoid. Functionally, binds to DNA and alters its conformation. May be involved in regulation of gene expression, nucleoid organization and DNA protection. The polypeptide is Nucleoid-associated protein CPR_0056 (Clostridium perfringens (strain SM101 / Type A)).